A 56-amino-acid chain; its full sequence is Photosystem II reaction center protein K (56 aa).

Positions 1–19 are excised as a propeptide; sequence MLNFLLQNTFVLWSNFILC. The helical transmembrane segment at 35–55 threads the bilayer; the sequence is MPVIPVFFFLLAFVWQAAVSF.

This sequence belongs to the PsbK family. In terms of assembly, PSII is composed of 1 copy each of membrane proteins PsbA, PsbB, PsbC, PsbD, PsbE, PsbF, PsbH, PsbI, PsbJ, PsbK, PsbL, PsbM, PsbT, PsbX, PsbY, PsbZ, Psb30/Ycf12, at least 3 peripheral proteins of the oxygen-evolving complex and a large number of cofactors. It forms dimeric complexes.

It localises to the plastid. The protein resides in the chloroplast thylakoid membrane. One of the components of the core complex of photosystem II (PSII). PSII is a light-driven water:plastoquinone oxidoreductase that uses light energy to abstract electrons from H(2)O, generating O(2) and a proton gradient subsequently used for ATP formation. It consists of a core antenna complex that captures photons, and an electron transfer chain that converts photonic excitation into a charge separation. This is Photosystem II reaction center protein K from Welwitschia mirabilis (Tree tumbo).